The chain runs to 171 residues: Co-chaperone protein HscB homolog (171 aa).

One can recognise a J domain in the interval 2–74 (NYFELFGLPI…LRRAEYLLSL (73 aa)).

Belongs to the HscB family. In terms of assembly, interacts with HscA and stimulates its ATPase activity.

Its function is as follows. Co-chaperone involved in the maturation of iron-sulfur cluster-containing proteins. Seems to help targeting proteins to be folded toward HscA. The chain is Co-chaperone protein HscB homolog from Vibrio cholerae serotype O1 (strain ATCC 39541 / Classical Ogawa 395 / O395).